Reading from the N-terminus, the 500-residue chain is NAD(P)H-quinone oxidoreductase chain 4, chloroplastic (500 aa).

The next 14 membrane-spanning stretches (helical) occupy residues 4–24 (FPWLTIIVVLPIFAGSSIFFF), 35–55 (YTICICLLELLLTTYAFCYHF), 87–107 (IGPVLLTGFITTLATLAAWPV), 113–130 (LFHFLMLAMYSGQIGSFS), 134–154 (LLLFFIMWELELIPVYLLLSM), 167–187 (FILYTAGGSIFLLIGVSGMGL), 208–228 (ALEILLYFGFFIAYAVKLPII), 242–262 (HYSTCMLLAGILLKMGAYGLV), 272–292 (AHSIFSPWLMIVGTIQIIYAA), 305–325 (IAYSSVSHMGFTILGISSITD), 330–350 (GAILQMISHGFIGAALFFLAG), 386–406 (LALPGMSGFVAELVVFFGIIT), 416–436 (ILITFVTAIGMILTPIYSLSM), and 463–483 (FVSICIFLPVIGIGIYPDFVF).

Belongs to the complex I subunit 4 family.

It localises to the plastid. The protein localises to the chloroplast thylakoid membrane. The enzyme catalyses a plastoquinone + NADH + (n+1) H(+)(in) = a plastoquinol + NAD(+) + n H(+)(out). It carries out the reaction a plastoquinone + NADPH + (n+1) H(+)(in) = a plastoquinol + NADP(+) + n H(+)(out). This chain is NAD(P)H-quinone oxidoreductase chain 4, chloroplastic, found in Nandina domestica (Heavenly bamboo).